Here is a 376-residue protein sequence, read N- to C-terminus: Chorismate synthase (376 aa).

NADP(+) contacts are provided by Arg39 and Arg45. FMN-binding positions include 115 to 117 (RSS), Gly276, 291 to 295 (KPIPT), and Arg317.

This sequence belongs to the chorismate synthase family. In terms of assembly, homotetramer. It depends on FMNH2 as a cofactor.

The catalysed reaction is 5-O-(1-carboxyvinyl)-3-phosphoshikimate = chorismate + phosphate. Its pathway is metabolic intermediate biosynthesis; chorismate biosynthesis; chorismate from D-erythrose 4-phosphate and phosphoenolpyruvate: step 7/7. Its function is as follows. Catalyzes the anti-1,4-elimination of the C-3 phosphate and the C-6 proR hydrogen from 5-enolpyruvylshikimate-3-phosphate (EPSP) to yield chorismate, which is the branch point compound that serves as the starting substrate for the three terminal pathways of aromatic amino acid biosynthesis. This reaction introduces a second double bond into the aromatic ring system. This Thermotoga maritima (strain ATCC 43589 / DSM 3109 / JCM 10099 / NBRC 100826 / MSB8) protein is Chorismate synthase.